Reading from the N-terminus, the 132-residue chain is Phosphoribosyl-AMP cyclohydrolase (132 aa).

Position 82 (Asp-82) interacts with Mg(2+). Zn(2+) is bound at residue Cys-83. Mg(2+) contacts are provided by Asp-84 and Asp-86. Residues Cys-99 and Cys-106 each coordinate Zn(2+).

This sequence belongs to the PRA-CH family. As to quaternary structure, homodimer. Requires Mg(2+) as cofactor. The cofactor is Zn(2+).

It localises to the cytoplasm. It carries out the reaction 1-(5-phospho-beta-D-ribosyl)-5'-AMP + H2O = 1-(5-phospho-beta-D-ribosyl)-5-[(5-phospho-beta-D-ribosylamino)methylideneamino]imidazole-4-carboxamide. Its pathway is amino-acid biosynthesis; L-histidine biosynthesis; L-histidine from 5-phospho-alpha-D-ribose 1-diphosphate: step 3/9. Its function is as follows. Catalyzes the hydrolysis of the adenine ring of phosphoribosyl-AMP. The sequence is that of Phosphoribosyl-AMP cyclohydrolase from Paramagnetospirillum magneticum (strain ATCC 700264 / AMB-1) (Magnetospirillum magneticum).